A 366-amino-acid chain; its full sequence is Proline-rich protein 19 (366 aa).

Disordered regions lie at residues 1-53, 102-149, 256-286, and 301-338; these read MDPR…RDPC, ESHT…DLPV, TPAH…AAWG, and ATPP…WSPN. A compositionally biased stretch (basic residues) spans 18–29; sequence GRIRRRKTRRER. 2 stretches are compositionally biased toward polar residues: residues 104-113 and 256-265; these read HTPQLPTKPS and TPAHRGSQVQ. The segment covering 275–286 has biased composition (low complexity); sequence SSASSPSGAAWG. Residues 302–326 are compositionally biased toward pro residues; sequence TPPPPPPQPWDVRPPQPLPQPPSPL.

As to quaternary structure, interacts with CNTD1. As to expression, preferentially expressed in gonads.

It localises to the nucleus. It is found in the chromosome. Functionally, promotes meiotic crossing over formation through its interaction with CNTD1 by participating in the crossover differentiation step of crossover-specific recombination intermediates. This Mus musculus (Mouse) protein is Proline-rich protein 19.